The primary structure comprises 272 residues: Putative phosphoenolpyruvate synthase regulatory protein (272 aa).

152–159 (GVSRCGKT) is a binding site for ADP.

Belongs to the pyruvate, phosphate/water dikinase regulatory protein family. PSRP subfamily.

The enzyme catalyses [pyruvate, water dikinase] + ADP = [pyruvate, water dikinase]-phosphate + AMP + H(+). The catalysed reaction is [pyruvate, water dikinase]-phosphate + phosphate + H(+) = [pyruvate, water dikinase] + diphosphate. Functionally, bifunctional serine/threonine kinase and phosphorylase involved in the regulation of the phosphoenolpyruvate synthase (PEPS) by catalyzing its phosphorylation/dephosphorylation. The polypeptide is Putative phosphoenolpyruvate synthase regulatory protein (Pseudomonas putida (strain W619)).